We begin with the raw amino-acid sequence, 282 residues long: Bifunctional protein FolD (282 aa).

Residues 160 to 162 (NRS), serine 185, and isoleucine 228 each bind NADP(+).

Belongs to the tetrahydrofolate dehydrogenase/cyclohydrolase family. As to quaternary structure, homodimer.

The catalysed reaction is (6R)-5,10-methylene-5,6,7,8-tetrahydrofolate + NADP(+) = (6R)-5,10-methenyltetrahydrofolate + NADPH. The enzyme catalyses (6R)-5,10-methenyltetrahydrofolate + H2O = (6R)-10-formyltetrahydrofolate + H(+). It participates in one-carbon metabolism; tetrahydrofolate interconversion. Its function is as follows. Catalyzes the oxidation of 5,10-methylenetetrahydrofolate to 5,10-methenyltetrahydrofolate and then the hydrolysis of 5,10-methenyltetrahydrofolate to 10-formyltetrahydrofolate. The sequence is that of Bifunctional protein FolD from Cenarchaeum symbiosum (strain A).